Here is a 402-residue protein sequence, read N- to C-terminus: Secreted RxLR effector protein 73 (402 aa).

A signal peptide spans 1-23; that stretch reads MRLLHVVVATVSLTGAITSLIAA. Asn27 is a glycosylation site (N-linked (GlcNAc...) asparagine). The RxLR signature appears at 104–107; it reads RVLR. N-linked (GlcNAc...) asparagine glycosylation is found at Asn111, Asn134, Asn143, Asn165, and Asn286.

The protein belongs to the RxLR effector family.

Its subcellular location is the secreted. It is found in the host cell. Secreted effector that completely suppresses the host cell death induced by cell death-inducing proteins. The protein is Secreted RxLR effector protein 73 of Plasmopara viticola (Downy mildew of grapevine).